The primary structure comprises 384 residues: Carbamoyl phosphate synthase small chain (384 aa).

The tract at residues 1-193 (MTKPATTPAI…DSHPEIPASE (193 aa)) is CPSase. The L-glutamine site is built by serine 51, glycine 245, and glycine 247. The Glutamine amidotransferase type-1 domain occupies 197–384 (HVVAYDYGVK…ISAMAPVVDR (188 aa)). Cysteine 273 functions as the Nucleophile in the catalytic mechanism. 5 residues coordinate L-glutamine: leucine 274, glutamine 277, asparagine 315, glycine 317, and phenylalanine 318. Residues histidine 357 and glutamate 359 contribute to the active site.

Belongs to the CarA family. As to quaternary structure, composed of two chains; the small (or glutamine) chain promotes the hydrolysis of glutamine to ammonia, which is used by the large (or ammonia) chain to synthesize carbamoyl phosphate. Tetramer of heterodimers (alpha,beta)4.

It carries out the reaction hydrogencarbonate + L-glutamine + 2 ATP + H2O = carbamoyl phosphate + L-glutamate + 2 ADP + phosphate + 2 H(+). It catalyses the reaction L-glutamine + H2O = L-glutamate + NH4(+). It functions in the pathway amino-acid biosynthesis; L-arginine biosynthesis; carbamoyl phosphate from bicarbonate: step 1/1. Its pathway is pyrimidine metabolism; UMP biosynthesis via de novo pathway; (S)-dihydroorotate from bicarbonate: step 1/3. In terms of biological role, small subunit of the glutamine-dependent carbamoyl phosphate synthetase (CPSase). CPSase catalyzes the formation of carbamoyl phosphate from the ammonia moiety of glutamine, carbonate, and phosphate donated by ATP, constituting the first step of 2 biosynthetic pathways, one leading to arginine and/or urea and the other to pyrimidine nucleotides. The small subunit (glutamine amidotransferase) binds and cleaves glutamine to supply the large subunit with the substrate ammonia. In Stutzerimonas stutzeri (Pseudomonas stutzeri), this protein is Carbamoyl phosphate synthase small chain.